A 33-amino-acid chain; its full sequence is ATSYEKITINKNSRSTLSSVRHIIRKNNYRKDL.

This sequence belongs to the eukaryotic ribosomal protein eL28 family. In terms of assembly, component of the large ribosomal subunit.

Its subcellular location is the cytoplasm. Component of the large ribosomal subunit. The ribosome is a large ribonucleoprotein complex responsible for the synthesis of proteins in the cell. The sequence is that of Large ribosomal subunit protein eL28 (rpl28) from Xenopus laevis (African clawed frog).